A 50-amino-acid chain; its full sequence is Insulin-1 (50 aa).

Cystine bridges form between C7–C36, C19–C49, and C35–C40.

The protein belongs to the insulin family. As to quaternary structure, heterodimer of a B chain and an A chain linked by two disulfide bonds.

The protein localises to the secreted. Functionally, insulin decreases blood glucose concentration. It increases cell permeability to monosaccharides, amino acids and fatty acids. It accelerates glycolysis, the pentose phosphate cycle, and glycogen synthesis in liver. The polypeptide is Insulin-1 (Thunnus orientalis (North Pacific bluefin tuna)).